The following is a 337-amino-acid chain: 5-formaminoimidazole-4-carboxamide-1-(beta)-D-ribofuranosyl 5'-monophosphate synthetase (337 aa).

5-amino-1-(5-phospho-beta-D-ribosyl)imidazole-4-carboxamide contacts are provided by His-23 and Ser-87. In terms of domain architecture, ATP-grasp spans 121 to 328 (MRLLEYAGIP…IAHEIVNAVK (208 aa)). Residues 144–191 (PVIV…VPAY) and Glu-213 each bind ATP. Residue Asn-233 coordinates 5-amino-1-(5-phospho-beta-D-ribosyl)imidazole-4-carboxamide. Residues Glu-272 and Glu-285 each coordinate Mg(2+).

This sequence belongs to the phosphohexose mutase family. The cofactor is Mg(2+). Mn(2+) serves as cofactor.

The enzyme catalyses 5-amino-1-(5-phospho-beta-D-ribosyl)imidazole-4-carboxamide + formate + ATP = 5-formamido-1-(5-phospho-D-ribosyl)imidazole-4-carboxamide + ADP + phosphate. It participates in purine metabolism; IMP biosynthesis via de novo pathway; 5-formamido-1-(5-phospho-D-ribosyl)imidazole-4-carboxamide from 5-amino-1-(5-phospho-D-ribosyl)imidazole-4-carboxamide (formate route): step 1/1. Its function is as follows. Catalyzes the ATP- and formate-dependent formylation of 5-aminoimidazole-4-carboxamide-1-beta-d-ribofuranosyl 5'-monophosphate (AICAR) to 5-formaminoimidazole-4-carboxamide-1-beta-d-ribofuranosyl 5'-monophosphate (FAICAR) in the absence of folates. This chain is 5-formaminoimidazole-4-carboxamide-1-(beta)-D-ribofuranosyl 5'-monophosphate synthetase, found in Caldivirga maquilingensis (strain ATCC 700844 / DSM 13496 / JCM 10307 / IC-167).